Here is a 692-residue protein sequence, read N- to C-terminus: UvrABC system protein C (692 aa).

Positions 16–95 constitute a GIY-YIG domain; sequence ETPGVYRFRD…IKEFDPRFNV (80 aa). Residues 208 to 243 form the UVR domain; that stretch reads GRYLRRLEREMRAAAEAQEYERAARLRDDIGALRRA. Residues 492-511 are disordered; it reads GELEEYPGAPTGDDEAPETG.

It belongs to the UvrC family. As to quaternary structure, interacts with UvrB in an incision complex.

Its subcellular location is the cytoplasm. Functionally, the UvrABC repair system catalyzes the recognition and processing of DNA lesions. UvrC both incises the 5' and 3' sides of the lesion. The N-terminal half is responsible for the 3' incision and the C-terminal half is responsible for the 5' incision. This Parafrankia sp. (strain EAN1pec) protein is UvrABC system protein C.